The primary structure comprises 318 residues: Probable arabinan endo-1,5-alpha-L-arabinosidase C (318 aa).

The signal sequence occupies residues 1-28 (MLSFVLLLCVALVNAYSDPGACSGTCWA). The active-site Proton acceptor is the D30. N-linked (GlcNAc...) asparagine glycans are attached at residues N72, N80, and N188. The active-site Proton donor is E196. The N-linked (GlcNAc...) asparagine glycan is linked to N277.

The protein belongs to the glycosyl hydrolase 43 family.

Its subcellular location is the secreted. The enzyme catalyses Endohydrolysis of (1-&gt;5)-alpha-arabinofuranosidic linkages in (1-&gt;5)-arabinans.. The protein operates within glycan metabolism; L-arabinan degradation. Functionally, endo-1,5-alpha-L-arabinanase involved in degradation of pectin. Its preferred substrate is linear 1,5-alpha-L-arabinan. This chain is Probable arabinan endo-1,5-alpha-L-arabinosidase C (abnC), found in Aspergillus niger (strain ATCC MYA-4892 / CBS 513.88 / FGSC A1513).